A 246-amino-acid chain; its full sequence is High mobility group protein 1 (246 aa).

The segment at residues 106 to 179 is a DNA-binding region (HMG box); that stretch reads PKKPLTVFFA…NYQREKSKYL (74 aa). The tract at residues 179–246 is disordered; it reads LEAKKNGTLP…KKKDKSNSSI (68 aa). The segment covering 214 to 227 has biased composition (basic and acidic residues); sequence PVEKRPHDDDGSSE. Positions 228-238 are enriched in basic residues; it reads KKKKKKKKDKK.

Interacts with FPR1. Interacts with an unidentified DNA helicase. Associates with rDNA.

The protein localises to the nucleus. It localises to the nucleolus. DNA-binding protein that is probably part of the rDNA transcription apparatus. Acts synergetically with the RPA49 subunit of RNA polymerase I during rDNA transcription. May participate in mutagenesis control. The polypeptide is High mobility group protein 1 (HMO1) (Saccharomyces cerevisiae (strain ATCC 204508 / S288c) (Baker's yeast)).